Consider the following 848-residue polypeptide: Coiled-coil and C2 domain-containing protein 1B (848 aa).

Over residues 1–10 (MPGPRPRKGP) the composition is skewed to basic residues. Disordered regions lie at residues 1–21 (MPGP…ETAK) and 53–75 (ALTG…PLPM). Positions 165–193 (LQALLEERIRNYREAAASAKEAGEAAKAR) form a coiled coil. Disordered stretches follow at residues 217–276 (EDEI…DPDP), 326–353 (VDLS…ATQG), 433–460 (DFAE…QDSV), and 476–523 (ALVD…SPSV). Positions 438 to 448 (PVPPGFPPIPG) are enriched in pro residues. S455 is modified (phosphoserine). Over residues 476 to 485 (ALVDDDEESD) the composition is skewed to acidic residues. Composition is skewed to low complexity over residues 487 to 498 (PAQAPLAKKPAQ) and 509 to 522 (EPKA…LSPS). The residue at position 583 (S583) is a Phosphoserine. Phosphothreonine is present on T586. Positions 600-626 (LRLSQKAEEVYAQLQKMLQEQQAKCLL) form a coiled coil. One can recognise a C2 domain in the interval 666–805 (DPPSHHFELK…EKECEIREIM (140 aa)).

Belongs to the CC2D1 family. Interacts with CHMP4B.

It is found in the nucleus. Functionally, transcription factor that binds specifically to the DRE (dual repressor element) and represses HTR1A gene transcription in neuronal cells. This Mus musculus (Mouse) protein is Coiled-coil and C2 domain-containing protein 1B (Cc2d1b).